A 521-amino-acid chain; its full sequence is Methionine--tRNA ligase (521 aa).

The short motif at tyrosine 14–histidine 24 is the 'HIGH' region element. Positions 129, 132, 151, and 155 each coordinate Zn(2+). A 'KMSKS' region motif is present at residues lysine 306–serine 310. Lysine 309 lines the ATP pocket.

This sequence belongs to the class-I aminoacyl-tRNA synthetase family. MetG type 2A subfamily. In terms of assembly, monomer. Requires Zn(2+) as cofactor.

The protein localises to the cytoplasm. It carries out the reaction tRNA(Met) + L-methionine + ATP = L-methionyl-tRNA(Met) + AMP + diphosphate. In terms of biological role, is required not only for elongation of protein synthesis but also for the initiation of all mRNA translation through initiator tRNA(fMet) aminoacylation. This Ureaplasma parvum serovar 3 (strain ATCC 700970) protein is Methionine--tRNA ligase.